We begin with the raw amino-acid sequence, 380 residues long: Mitogen-activated protein kinase 3 (380 aa).

Ala2 is subject to N-acetylalanine. Residues 43–331 form the Protein kinase domain; the sequence is YTQLQYIGEG…VEEALAHPYL (289 aa). Residues 49-57 and Lys72 contribute to the ATP site; that span reads IGEGAYGMV. The active-site Proton acceptor is Asp167. Thr199 carries the phosphothreonine modification. A Phosphothreonine; by MAP2K1 and MAP2K2 modification is found at Thr203. A TXY motif is present at residues 203-205; that stretch reads TEY. Tyr205 carries the phosphotyrosine; by MAP2K1 and MAP2K2 modification. Thr208 bears the Phosphothreonine; by autocatalysis mark.

Belongs to the protein kinase superfamily. CMGC Ser/Thr protein kinase family. MAP kinase subfamily. As to quaternary structure, binds both upstream activators and downstream substrates in multimolecular complexes. Found in a complex with at least BRAF, HRAS, MAP2K1/MEK1, MAPK3 and RGS14. Interacts with ADAM15, ARRB2, CANX, DAPK1 (via death domain), HSF4, IER3, MAP2K1/MEK1, MORG1, NISCH, PEA15, SGK1 and MKNK2. MKNK2 isoform 1 binding prevents from dephosphorylation and inactivation. Interacts with TPR. Interacts with HSF1 (via D domain and preferentially with hyperphosphorylated form); this interaction occurs upon heat shock. Interacts with CDKN2AIP. Interacts with CAVIN4. Interacts with GIT1; this interaction is necessary for MAPK3 localization to focal adhesions. Interacts with ZNF263. Interacts with EBF4. It depends on Mg(2+) as a cofactor. Phosphorylated upon FLT3 and KIT signaling. Ligand-activated ALK induces tyrosine phosphorylation. Dephosphorylated by PTPRJ at Tyr-205. Dually phosphorylated on Thr-203 and Tyr-205, which activates the enzyme. Post-translationally, ubiquitinated by TRIM15 via 'Lys-63'-linked ubiquitination; leading to activation. Deubiquitinated by CYLD. Highest levels within the nervous system, expressed in different tissues, mostly in intestine, placenta and lung.

It is found in the cytoplasm. The protein localises to the nucleus. The protein resides in the membrane. It localises to the caveola. Its subcellular location is the cell junction. It is found in the focal adhesion. The catalysed reaction is L-seryl-[protein] + ATP = O-phospho-L-seryl-[protein] + ADP + H(+). It catalyses the reaction L-threonyl-[protein] + ATP = O-phospho-L-threonyl-[protein] + ADP + H(+). Phosphorylated by MAP2K1/MEK1 and MAP2K2/MEK2 on Thr-203 and Tyr-205 in response to external stimuli like insulin or NGF. Both phosphorylations are required for activity. This phosphorylation causes dramatic conformational changes, which enable full activation and interaction of MAPK1/ERK2 with its substrates. Dephosphorylated and inactivated by DUSP3, DUSP6 and DUSP9. In terms of biological role, serine/threonine kinase which acts as an essential component of the MAP kinase signal transduction pathway. MAPK1/ERK2 and MAPK3/ERK1 are the 2 MAPKs which play an important role in the MAPK/ERK cascade. They participate also in a signaling cascade initiated by activated KIT and KITLG/SCF. Depending on the cellular context, the MAPK/ERK cascade mediates diverse biological functions such as cell growth, adhesion, survival and differentiation through the regulation of transcription, translation, cytoskeletal rearrangements. The MAPK/ERK cascade also plays a role in initiation and regulation of meiosis, mitosis, and postmitotic functions in differentiated cells by phosphorylating a number of transcription factors. About 160 substrates have already been discovered for ERKs. Many of these substrates are localized in the nucleus, and seem to participate in the regulation of transcription upon stimulation. However, other substrates are found in the cytosol as well as in other cellular organelles, and those are responsible for processes such as translation, mitosis and apoptosis. Moreover, the MAPK/ERK cascade is also involved in the regulation of the endosomal dynamics, including lysosome processing and endosome cycling through the perinuclear recycling compartment (PNRC); as well as in the fragmentation of the Golgi apparatus during mitosis. The substrates include transcription factors (such as ATF2, BCL6, ELK1, ERF, FOS, HSF4 or SPZ1), cytoskeletal elements (such as CANX, CTTN, GJA1, MAP2, MAPT, PXN, SORBS3 or STMN1), regulators of apoptosis (such as BAD, BTG2, CASP9, DAPK1, IER3, MCL1 or PPARG), regulators of translation (such as EIF4EBP1) and a variety of other signaling-related molecules (like ARHGEF2, DEPTOR, FRS2 or GRB10). Protein kinases (such as RAF1, RPS6KA1/RSK1, RPS6KA3/RSK2, RPS6KA2/RSK3, RPS6KA6/RSK4, SYK, MKNK1/MNK1, MKNK2/MNK2, RPS6KA5/MSK1, RPS6KA4/MSK2, MAPKAPK3 or MAPKAPK5) and phosphatases (such as DUSP1, DUSP4, DUSP6 or DUSP16) are other substrates which enable the propagation the MAPK/ERK signal to additional cytosolic and nuclear targets, thereby extending the specificity of the cascade. The sequence is that of Mitogen-activated protein kinase 3 (Mapk3) from Rattus norvegicus (Rat).